A 590-amino-acid chain; its full sequence is Putative ferric-chelate reductase 1 (590 aa).

The helical transmembrane segment at 2 to 22 threads the bilayer; the sequence is NPLGLFLIYLYTCALTPVSGY. Residues 12–179 form the Reelin domain; sequence YTCALTPVSG…APKIPSSTIP (168 aa). One can recognise a DOMON domain in the interval 217 to 330; the sequence is ECFFLSFRKD…RSYFIFLADG (114 aa). Residues 334 to 533 form the Cytochrome b561 domain; the sequence is DGLLYRHHRQ…VFVDLLLEAH (200 aa). Residues 371-391 traverse the membrane as a helical segment; sequence LHGAMMFIAWMTTVSIGVIIA. 2 residues coordinate heme b: H372 and H413. The next 2 helical transmembrane spans lie at 416-436 and 445-465; these read LMIT…IYRG and HPHL…LAVF. H445 is a binding site for heme b. N478 carries N-linked (GlcNAc...) asparagine glycosylation. H481 provides a ligand contact to heme b. 3 helical membrane passes run 482-502, 517-537, and 567-587; these read WATG…GMDL, IGFV…GFCL, and IVMT…LAAI.

Belongs to the FRRS1 family. Heme b serves as cofactor.

It is found in the membrane. Its function is as follows. Putative ferric-chelate reductases reduce Fe(3+) to Fe(2+) before its transport from the endosome to the cytoplasm. This Xenopus laevis (African clawed frog) protein is Putative ferric-chelate reductase 1 (frrs1).